The following is a 181-amino-acid chain: Transcriptional repressor NrdR (181 aa).

The segment at 3–34 (CLFCQHTYTRVIDSRVSEDGATIRRRRECEAC) is a zinc-finger region. The ATP-cone domain maps to 49 to 139 (PVIIKKDGGR…VYRSFQDVAD (91 aa)).

It belongs to the NrdR family. Zn(2+) is required as a cofactor.

Functionally, negatively regulates transcription of bacterial ribonucleotide reductase nrd genes and operons by binding to NrdR-boxes. The protein is Transcriptional repressor NrdR of Xylella fastidiosa (strain 9a5c).